The primary structure comprises 123 residues: DNA-directed RNA polymerase I subunit RPA12 (123 aa).

Cysteine 17, cysteine 20, cysteine 35, cysteine 38, cysteine 84, and cysteine 87 together coordinate Zn(2+). The C4-type zinc-finger motif lies at 17-38 (CPDCGSVLPLPGIQDTVICSRC). A TFIIS-type zinc finger spans residues 80–120 (IDRRCPRCGHEGMAYHTRQMRSADEGQTVFYTCINCKFQEK). The Hairpin signature appears at 103-104 (DE). Residues cysteine 112 and cysteine 115 each coordinate Zn(2+).

Belongs to the archaeal RpoM/eukaryotic RPA12/RPB9/RPC11 RNA polymerase family. Component of the RNA polymerase I (Pol I) complex consisting of 13 subunits: a ten-subunit catalytic core composed of POLR1A/RPA1, POLR1B/RPA2, POLR1C/RPAC1, POLR1D/RPAC2, POLR1H/RPA12, POLR2E/RPABC1, POLR2F/RPABC2, POLR2H/RPABC3, POLR2K/RPABC4 and POLR2L/RPABC5; a mobile stalk subunit POLR1F/RPA43 protruding from the core and additional subunits homologous to general transcription factors POLR1E/RPA49 and POLR1G/RPA34. Part of Pol I pre-initiation complex (PIC), in which Pol I core assembles with RRN3 and promoter-bound UTBF and SL1/TIF-IB complex.

It is found in the nucleus. The protein resides in the nucleolus. Its function is as follows. Core component of RNA polymerase I (Pol I), a DNA-dependent RNA polymerase which synthesizes ribosomal RNA precursors using the four ribonucleoside triphosphates as substrates. Can mediate Pol I proofreading of the nascent RNA transcript. Anchors into the Pol I active site to monitor transcription fidelity and cleave mis-incorporated 5'-ribonucleotides. This chain is DNA-directed RNA polymerase I subunit RPA12, found in Mus musculus (Mouse).